Here is a 110-residue protein sequence, read N- to C-terminus: MKDRKILNEILSNTINELNLNDKKANIKIKIKPLKRKIASISLTNKTIYINKNILPYLSDEEIRFILAHELLHLKYGKYHINEFEEELLFLFPNKEAILINLINKLHQKK.

This sequence to M.jannaschii MJ0123 and A.aeolicus AA15.

This is an uncharacterized protein from Methanocaldococcus jannaschii (strain ATCC 43067 / DSM 2661 / JAL-1 / JCM 10045 / NBRC 100440) (Methanococcus jannaschii).